The following is a 188-amino-acid chain: Threonylcarbamoyl-AMP synthase (188 aa).

The YrdC-like domain occupies 3-188 (QLHPSDIKDI…RSGKILRNGQ (186 aa)).

It belongs to the SUA5 family. TsaC subfamily.

It localises to the cytoplasm. The enzyme catalyses L-threonine + hydrogencarbonate + ATP = L-threonylcarbamoyladenylate + diphosphate + H2O. Functionally, required for the formation of a threonylcarbamoyl group on adenosine at position 37 (t(6)A37) in tRNAs that read codons beginning with adenine. Catalyzes the conversion of L-threonine, HCO(3)(-)/CO(2) and ATP to give threonylcarbamoyl-AMP (TC-AMP) as the acyladenylate intermediate, with the release of diphosphate. This chain is Threonylcarbamoyl-AMP synthase, found in Shewanella baltica (strain OS195).